The primary structure comprises 380 residues: Alpha-N-acetylneuraminate alpha-2,8-sialyltransferase ST8SIA3 (380 aa).

At 1–17 (MRNCKMARVASVLGLVM) the chain is on the cytoplasmic side. The helical; Signal-anchor for type II membrane protein transmembrane segment at 18–33 (LSVALLILSLISYVSL) threads the bilayer. Residues 34-380 (KKENIFTTPK…LTKLTLSHCA (347 aa)) lie on the Lumenal side of the membrane. Asn93 and Asn113 each carry an N-linked (GlcNAc...) asparagine glycan. Disulfide bonds link Cys162/Cys313 and Cys176/Cys379. 2 residues coordinate CMP-N-acetyl-beta-neuraminate: Asn167 and Asn190. An N-linked (GlcNAc...) asparagine glycan is attached at Asn206. CMP-N-acetyl-beta-neuraminate-binding residues include Ser300, Thr301, Gly302, Trp322, Tyr336, and His337. His354 serves as the catalytic Proton donor/acceptor.

This sequence belongs to the glycosyltransferase 29 family. In terms of assembly, homodimer. In terms of tissue distribution, expressed in neurons in brain with higher expression in the striatum than in the hippocampus, cortex, and cerebellum (at protein level). Expressed in testes.

Its subcellular location is the golgi apparatus membrane. It catalyses the reaction a ganglioside GM3 (d18:1(4E)) + CMP-N-acetyl-beta-neuraminate = a ganglioside GD3 (d18:1(4E)) + CMP + H(+). The catalysed reaction is a ganglioside GM3 + CMP-N-acetyl-beta-neuraminate = a ganglioside GD3 + CMP + H(+). The enzyme catalyses an N-acetyl-alpha-neuraminyl-(2-&gt;3)-beta-D-galactosyl derivative + CMP-N-acetyl-beta-neuraminate = an N-acetyl-alpha-neuraminyl-(2-&gt;8)-N-acetyl-alpha-neuraminyl-(2-&gt;3)-beta-D-galactosyl derivative + CMP + H(+). It carries out the reaction an N-acetyl-alpha-neuraminyl-(2-&gt;3)-beta-D-galactosyl-(1-&gt;4)-N-acetyl-beta-D-glucosaminyl derivative + CMP-N-acetyl-beta-neuraminate = an alpha-Neu5Ac-(2-&gt;8)-alpha-Neu5Ac-(2-&gt;3)-beta-D-Gal-(1-&gt;4)-beta-D-GlcNAc derivative + CMP + H(+). It participates in protein modification; protein glycosylation. Functionally, catalyzes the transfer of sialic acid from a CMP-linked sialic acid donor onto a terminal alpha-2,3-, alpha-2,6-, or alpha-2,8-linked sialic acid of an acceptor, such as N-linked oligosaccharides of glycoproteins and glycolipids through alpha-2,8-linkages. Forms oligosialic and polysialic acid on various sialylated N-acetyllactosamine oligosaccharides of glycoproteins, including FETUB N-glycans, a2-HS-glycoprotein (AHSG) and alpha 2,3-sialylated glycosphingolipids, such as alpha 2,3-sialylparagloboside and ganglioside GM3 and to a lesser extent NCAM1 N-glycans. However, it is much more specific to N-linked oligosaccharides of glycoproteins than glycosphingolipids. 2,3-sialylparagloboside served as the best acceptor substrate among the glycolipids. alpha-Neu5Ac-(2-&gt;8)-alpha-Neu5Ac-(2-&gt;3)-beta-D-Gal-(1-&gt;4)-6S-D-GlcNAc and monosialyl and disialyl N-acetyllactosamines are the best acceptor substrates among glycoproteins. May play critical role in the striatum by mediating the formation of disialylated and trisialylated terminal glycotopes on N- and O-glycans of specific striatal proteins, regulating their distribution in lipid rafts, affecting their interaction with other binding partners, and subsequently modulating striatal functions. This Mus musculus (Mouse) protein is Alpha-N-acetylneuraminate alpha-2,8-sialyltransferase ST8SIA3.